Here is a 547-residue protein sequence, read N- to C-terminus: Chaperonin GroEL (547 aa).

Residues 30 to 33 (TLGP), Lys-51, 87 to 91 (DGTTT), Gly-415, 479 to 481 (NAA), and Asp-495 each bind ATP. The tract at residues 526–547 (KEEKSDLSVPPQGGMGGMGGMM) is disordered. Gly residues predominate over residues 538-547 (GGMGGMGGMM).

The protein belongs to the chaperonin (HSP60) family. Forms a cylinder of 14 subunits composed of two heptameric rings stacked back-to-back. Interacts with the co-chaperonin GroES.

The protein localises to the cytoplasm. It catalyses the reaction ATP + H2O + a folded polypeptide = ADP + phosphate + an unfolded polypeptide.. Its function is as follows. Together with its co-chaperonin GroES, plays an essential role in assisting protein folding. The GroEL-GroES system forms a nano-cage that allows encapsulation of the non-native substrate proteins and provides a physical environment optimized to promote and accelerate protein folding. The polypeptide is Chaperonin GroEL (Buchnera aphidicola subsp. Tetraneura caerulescens).